Here is a 208-residue protein sequence, read N- to C-terminus: Ras-related protein Rab-6B (208 aa).

GTP contacts are provided by residues 20–27 (GEQSVGKT), threonine 45, 68–72 (DTAGQ), and 126–129 (NKTD). An Effector region motif is present at residues 42–50 (YQATIGIDF). 2 S-geranylgeranyl cysteine lipidation sites follow: cysteine 206 and cysteine 208. Cysteine methyl ester is present on cysteine 208.

It belongs to the small GTPase superfamily. Rab family. In terms of assembly, interacts (GTP-bound) with BICD1 (via C-terminus); the interaction is direct. Interacts (GDP-bound) with DYNLRB1. Interacts (GTP-bound) with APBA1/MINT1. Interacts (GTP-bound) with VPS13B.

Its subcellular location is the golgi apparatus membrane. It localises to the endoplasmic reticulum-Golgi intermediate compartment. It is found in the cytoplasmic vesicle. The catalysed reaction is GTP + H2O = GDP + phosphate + H(+). Its activity is regulated as follows. Regulated by guanine nucleotide exchange factors (GEFs) which promote the exchange of bound GDP for free GTP, GTPase activating proteins (GAPs) which increase the GTP hydrolysis activity, and GDP dissociation inhibitors which inhibit the dissociation of the nucleotide from the GTPase. Functionally, the small GTPases Rab are key regulators of intracellular membrane trafficking, from the formation of transport vesicles to their fusion with membranes. Rabs cycle between active GTP-bound and inactive GDP-bound states. In their active state, drive transport of vesicular carriers from donor organelles to acceptor organelles to regulate the membrane traffic that maintains organelle identity and morphology. Recruits VPS13B to the Golgi membrane. Regulates the compacted morphology of the Golgi. Seems to have a role in retrograde membrane traffic at the level of the Golgi complex. May function in retrograde transport in neuronal cells. Plays a role in neuron projection development. This is Ras-related protein Rab-6B (RAB6B) from Bos taurus (Bovine).